A 357-amino-acid polypeptide reads, in one-letter code: LINE-1 retrotransposable element ORF1 protein (357 aa).

Residues 1–40 (MAKGKRKNPTNRNQDHSPSSERSTPTPPSPGHPNTTENLD) are disordered. Residues 59 to 156 (HKSLKDLQES…IENIDTTVKE (98 aa)) adopt a coiled-coil conformation. An RNA recognition motif (RRM) domain region spans residues 179–274 (NLRIIGIDEN…KGRPIRITPD (96 aa)). A C-terminal domain (CTD) region spans residues 278-339 (ETMKARRAWT…STNPALQRII (62 aa)).

It belongs to the transposase 22 family. In terms of assembly, homotrimer (via coiled coil domain). May also form larger homooligomers. Interacts with Tex19.1 and UBR2. Interacts with MOV10. In terms of processing, polyubiquitinated, probably by UBR2, which induces its degradation. As to expression, expressed in meiotic spermatocytes and in the cerebellum (at protein level).

It is found in the nucleus. The protein resides in the nucleolus. Its subcellular location is the cytoplasm. The protein localises to the cytoplasmic ribonucleoprotein granule. It localises to the stress granule. Functionally, nucleic acid-binding protein which is essential for retrotransposition of LINE-1 elements in the genome. Functions as a nucleic acid chaperone binding its own transcript and therefore preferentially mobilizing the transcript from which they are encoded. The polypeptide is LINE-1 retrotransposable element ORF1 protein (Mus musculus (Mouse)).